We begin with the raw amino-acid sequence, 2488 residues long: Neuron navigator 2 (2488 aa).

Residues 85–192 enclose the Calponin-homology (CH) domain; it reads GFDTQIYTDW…LFFSLSRYKQ (108 aa). 3 stretches are compositionally biased toward low complexity: residues 194 to 204, 221 to 247, and 255 to 267; these read QQQPQKQHLSS, QAGT…PHQQ, and QSSA…SQSK. 2 disordered regions span residues 194-675 and 706-727; these read QQQP…GSNT and TEGN…SHFT. A compositionally biased stretch (polar residues) spans 299–315; it reads GGSTTANNRRSQSFNNY. Over residues 356–369 the composition is skewed to low complexity; it reads SGSSSTPTNCSTSS. Residues 384-396 are compositionally biased toward polar residues; that stretch reads KSLSVKHSATVSM. A compositionally biased stretch (pro residues) spans 401–410; that stretch reads PPGPEAPRPT. The span at 492–506 shows a compositional bias: polar residues; the sequence is RTFSRALTNKKSSLK. The stretch at 498 to 531 forms a coiled coil; sequence LTNKKSSLKGNEKEKEKQQREKDKEKSKDLAKRA. Over residues 507–547 the composition is skewed to basic and acidic residues; that stretch reads GNEKEKEKQQREKDKEKSKDLAKRASVTERLDLKEEPKEDP. Residues 592 to 606 are compositionally biased toward low complexity; the sequence is MKSMPGKSPSAPAPS. The span at 615–626 shows a compositional bias: polar residues; it reads GKLSSGLPQQKP. Low complexity-rich tracts occupy residues 633–642 and 657–675; these read SSSSSSLASS and SSQT…GSNT. Residues 706–719 show a composition bias toward polar residues; it reads TEGNVTAESSSTGV. The stretch at 743 to 771 forms a coiled coil; that stretch reads EARRLRTVKNIADLRQNLEETMSSLRGTQ. 9 disordered regions span residues 804 to 824, 939 to 1151, 1177 to 1200, 1213 to 1283, 1295 to 1338, 1355 to 1412, 1440 to 1460, 1473 to 1560, and 1591 to 1629; these read LSWR…PSMG, LGLG…QSGS, KSSA…NQDD, YRSL…SDNE, PAAQ…PIAT, MTQQ…TNAS, SLSS…ASSK, VKTT…VTSP, and SLSN…SFRD. Positions 939 to 985 are enriched in low complexity; it reads LGLGDADSWDDSSSVSSGISDTIDNLSTDDINTSSSISSYANTPASS. Positions 1091 to 1102 are enriched in basic and acidic residues; it reads KTDDAKVSEKGR. Over residues 1130–1142 the composition is skewed to polar residues; it reads PSSSRTPTANANS. Residues 1220-1245 are compositionally biased toward low complexity; that stretch reads SKSNSRNGAGNRSSTSSIDSNISSKS. A compositionally biased stretch (polar residues) spans 1299 to 1309; the sequence is PVSSPAQTSLQ. Composition is skewed to low complexity over residues 1363–1380 and 1388–1404; these read SPSG…PLYS and SPLA…PSNS. Residues 1440–1456 are compositionally biased toward polar residues; sequence SLSSGGVPSHNSSTGLI. Over residues 1477–1489 the composition is skewed to low complexity; the sequence is LSESPLSSPAASP. Phosphoserine occurs at positions 1480, 1484, and 1488. Composition is skewed to basic and acidic residues over residues 1498 to 1510 and 1526 to 1535; these read RKQD…DRNT and TQEDAKEWLR. Positions 1549–1560 are enriched in low complexity; it reads SPFSSGSSVTSP. A coiled-coil region spans residues 1686–1773; it reads EEKCQSEIRK…AAAQAAINGV (88 aa). Disordered regions lie at residues 1790-1887 and 1951-1985; these read ADLR…LRNS and AEND…MGLS. Polar residues-rich tracts occupy residues 1800–1820, 1875–1887, and 1959–1985; these read SDSV…SNIE, NGST…LRNS, and ESQG…MGLS. The stretch at 1897–1964 forms a coiled coil; that stretch reads MDSEAETVMQ…RLKSESQGSG (68 aa). The residue at position 1977 (Ser-1977) is a Phosphoserine. Position 2157–2164 (2157–2164) interacts with ATP; that stretch reads GPSGTGKT. Positions 2423-2488 are disordered; the sequence is DGYSMPREGS…ILDSSLESTL (66 aa). The segment covering 2460–2473 has biased composition (low complexity); sequence YSSPQSYDSDSNSN.

This sequence belongs to the Nav/unc-53 family. In terms of tissue distribution, highly expressed in the brain, kidney and liver. Also expressed in the thyroid, mammary gland, spinal cord, heart, placenta and lung. Abundantly expressed in colon cancers.

The protein resides in the nucleus. The enzyme catalyses ATP + H2O = ADP + phosphate + H(+). Possesses 3' to 5' helicase activity and exonuclease activity. Involved in neuronal development, specifically in the development of different sensory organs. This Homo sapiens (Human) protein is Neuron navigator 2 (NAV2).